Here is a 35-residue protein sequence, read N- to C-terminus: Photosystem II reaction center protein T (35 aa).

The helical transmembrane segment at Ala3–Phe23 threads the bilayer.

The protein belongs to the PsbT family. In terms of assembly, PSII is composed of 1 copy each of membrane proteins PsbA, PsbB, PsbC, PsbD, PsbE, PsbF, PsbH, PsbI, PsbJ, PsbK, PsbL, PsbM, PsbT, PsbY, PsbZ, Psb30/Ycf12, at least 3 peripheral proteins of the oxygen-evolving complex and a large number of cofactors. It forms dimeric complexes.

It localises to the plastid. The protein localises to the chloroplast thylakoid membrane. In terms of biological role, found at the monomer-monomer interface of the photosystem II (PS II) dimer, plays a role in assembly and dimerization of PSII. PSII is a light-driven water plastoquinone oxidoreductase, using light energy to abstract electrons from H(2)O, generating a proton gradient subsequently used for ATP formation. The polypeptide is Photosystem II reaction center protein T (Asarum canadense (Wild ginger)).